The chain runs to 680 residues: Methionine--tRNA ligase (680 aa).

A 'HIGH' region motif is present at residues 14–24; that stretch reads PYANGPIHLGH. Positions 145, 148, 158, and 161 each coordinate Zn(2+). The short motif at 330-334 is the 'KMSKS' region element; that stretch reads KMSKS. Lys333 serves as a coordination point for ATP. Residues 579–680 enclose the tRNA-binding domain; the sequence is DFAKVDFRIA…DGAQPGMRVK (102 aa).

The protein belongs to the class-I aminoacyl-tRNA synthetase family. MetG type 1 subfamily. As to quaternary structure, homodimer. Zn(2+) is required as a cofactor.

It is found in the cytoplasm. The catalysed reaction is tRNA(Met) + L-methionine + ATP = L-methionyl-tRNA(Met) + AMP + diphosphate. Functionally, is required not only for elongation of protein synthesis but also for the initiation of all mRNA translation through initiator tRNA(fMet) aminoacylation. The chain is Methionine--tRNA ligase from Hydrogenovibrio crunogenus (strain DSM 25203 / XCL-2) (Thiomicrospira crunogena).